The following is an 873-amino-acid chain: Chitin synthase F (873 aa).

The segment at 1 to 105 (MEDAHDQSSR…KSGSGLRRYP (105 aa)) is disordered. Composition is skewed to polar residues over residues 33–46 (SYPSNENEDVSQSL), 58–72 (ISSQWPPGTIQQNPS), and 80–98 (ESEVASQTSWQRRQTTKSG). N-linked (GlcNAc...) asparagine glycosylation is present at Asn-506. 7 helical membrane-spanning segments follow: residues 532 to 554 (LVFLHVQLVYNICQLTMTWFSLA), 588 to 608 (IVNNIIKALYLAFLMQQFFLA), 621 to 641 (ILTFLYFAIVQLYILILSFYL), 672 to 692 (GLVLIALVSTYGTYIIASILY), 702 to 722 (SWAYFLGMPLTINVLNVYAFC), 802 to 822 (LVLLWTLCNGLLALLINNDSV), and 841 to 861 (VILWATSGLSVFRFLGALWFL).

Belongs to the chitin synthase family. Class III subfamily.

The protein resides in the cell membrane. It carries out the reaction [(1-&gt;4)-N-acetyl-beta-D-glucosaminyl](n) + UDP-N-acetyl-alpha-D-glucosamine = [(1-&gt;4)-N-acetyl-beta-D-glucosaminyl](n+1) + UDP + H(+). In terms of biological role, polymerizes chitin, a structural polymer of the cell wall and septum, by transferring the sugar moiety of UDP-GlcNAc to the non-reducing end of the growing chitin polymer. Plays an important role in septal growth or maintenance. Mediates colony spore formation. This chain is Chitin synthase F, found in Aspergillus niger (strain ATCC MYA-4892 / CBS 513.88 / FGSC A1513).